Consider the following 507-residue polypeptide: Desmethyl-deoxy-podophyllotoxin synthase (507 aa).

A helical transmembrane segment spans residues 1 to 21 (MEFLSFPLSSALLIILLFMLV). C440 is a binding site for heme.

The protein belongs to the cytochrome P450 family. Requires heme as cofactor. In terms of tissue distribution, rhizome-specific expression.

It is found in the membrane. It catalyses the reaction (-)-deoxypodophyllotoxin + reduced [NADPH--hemoprotein reductase] + O2 = (-)-4'-desmethyl-deoxypodophyllotoxin + formaldehyde + oxidized [NADPH--hemoprotein reductase] + H2O + H(+). It functions in the pathway aromatic compound metabolism; phenylpropanoid biosynthesis. Its function is as follows. Cytochrome P450 involved in the biosynthesis of etoposide, a chemotherapeutic compound of the topoisomerase inhibitor family. Catalyzes the conversion of deoxypodophyllotoxin to desmethyl-deoxypodophyllotoxin. This chain is Desmethyl-deoxy-podophyllotoxin synthase, found in Sinopodophyllum hexandrum (Himalayan may apple).